Consider the following 714-residue polypeptide: Centromere/kinetochore protein zw10 (714 aa).

It belongs to the ZW10 family.

It localises to the cytoplasm. The protein localises to the nucleus. The protein resides in the chromosome. Its subcellular location is the centromere. It is found in the kinetochore. Its function is as follows. Required for accurate chromosome segregation. This chain is Centromere/kinetochore protein zw10 (mit(1)15), found in Drosophila grimshawi (Hawaiian fruit fly).